A 194-amino-acid polypeptide reads, in one-letter code: GTP cyclohydrolase-2 (194 aa).

50 to 54 (RIHSE) contacts GTP. 3 residues coordinate Zn(2+): C55, C66, and C68. GTP contacts are provided by residues 94–96 (EGR) and T116. Catalysis depends on D128, which acts as the Proton acceptor. R130 (nucleophile) is an active-site residue. GTP is bound by residues T151 and K156.

It belongs to the GTP cyclohydrolase II family. The cofactor is Zn(2+).

The catalysed reaction is GTP + 4 H2O = 2,5-diamino-6-hydroxy-4-(5-phosphoribosylamino)-pyrimidine + formate + 2 phosphate + 3 H(+). Its pathway is cofactor biosynthesis; riboflavin biosynthesis; 5-amino-6-(D-ribitylamino)uracil from GTP: step 1/4. Catalyzes the conversion of GTP to 2,5-diamino-6-ribosylamino-4(3H)-pyrimidinone 5'-phosphate (DARP), formate and pyrophosphate. This chain is GTP cyclohydrolase-2, found in Helicobacter hepaticus (strain ATCC 51449 / 3B1).